The sequence spans 1148 residues: Zinc finger CCCH domain-containing protein 18 (1148 aa).

Residues 1-13 are compositionally biased toward low complexity; it reads MDTPESPTQSPQS. 3 disordered regions span residues 1 to 315, 380 to 417, and 521 to 1127; these read MDTP…PMDR, DPFS…LPPP, and YTET…REEL. Composition is skewed to basic and acidic residues over residues 53–73 and 82–96; these read VPEH…AGRE and EDYK…DIHQ. Composition is skewed to acidic residues over residues 144–156 and 167–176; these read ERGD…EEDE and ELEEEEDEEE. Residues 190 to 202 are compositionally biased toward basic and acidic residues; it reads DLKDESSVSRDLD. Acidic residues-rich tracts occupy residues 203-214 and 233-245; these read EHELDYDEEVPE and EDGE…DEEE. Basic and acidic residues predominate over residues 261-289; sequence DNRDTPLRKSEDSREGGRRDSFRDKKKEE. The span at 290-306 shows a compositional bias: acidic residues; that stretch reads DDGEIDEGEIDDDDLEE. Residues 388–397 show a composition bias toward gly residues; the sequence is PPGGAAGGGP. The segment covering 530–615 has biased composition (basic and acidic residues); sequence PDRERERDPR…EKKDEKEKTL (86 aa). A coiled-coil region spans residues 543–584; it reads RERERERERDHRERERRQREREREREREREKDSRRRKDEWDR. Residues 622–631 show a composition bias toward pro residues; that stretch reads NMPPRGPMEP. Over residues 632–646 the composition is skewed to basic and acidic residues; that stretch reads PTKKDMLSVTKRPDE. Ser-666 is subject to Phosphoserine. Over residues 677 to 740 the composition is skewed to low complexity; the sequence is SGSSVSLSNS…SRSGSFSSSP (64 aa). Pro residues-rich tracts occupy residues 783 to 800 and 807 to 817; these read KVMP…PPKP and PPNPRPPGRPP. Residues 818–833 show a composition bias toward basic and acidic residues; it reads GPREPREPPNMREGRK. Composition is skewed to low complexity over residues 847 to 875, 882 to 903, and 914 to 925; these read VSGS…ASRS, SLSV…SVRS, and ASPVSSASSRSP. 2 stretches are compositionally biased toward basic and acidic residues: residues 933–964 and 1012–1029; these read DRGP…KRVD and QTDR…KERP. Residue Ser-1056 is modified to Phosphoserine. Composition is skewed to low complexity over residues 1083 to 1098 and 1107 to 1119; these read PAKS…SAAK and GSAS…KPSS. Residues 1118-1146 adopt a coiled-coil conformation; the sequence is SSTLSRREELLKQLKAVEDAIARKRAKIP.

Its subcellular location is the nucleus. The polypeptide is Zinc finger CCCH domain-containing protein 18 (zc3h18) (Danio rerio (Zebrafish)).